A 190-amino-acid polypeptide reads, in one-letter code: Holliday junction branch migration complex subunit RuvA (190 aa).

Positions 1 to 64 are domain I; that stretch reads MIGRITGTLI…EDAQLLYGFG (64 aa). Residues 65–137 form a domain II region; sequence SSAERSTFRE…MRGKLGADIG (73 aa). Residues 137–141 form a flexible linker region; the sequence is GATPH. The interval 142–190 is domain III; sequence AASGHQSDILNALLALGYSDKESQAALKKLPDGVDVSEGIRLALKALVR.

The protein belongs to the RuvA family. Homotetramer. Forms an RuvA(8)-RuvB(12)-Holliday junction (HJ) complex. HJ DNA is sandwiched between 2 RuvA tetramers; dsDNA enters through RuvA and exits via RuvB. An RuvB hexamer assembles on each DNA strand where it exits the tetramer. Each RuvB hexamer is contacted by two RuvA subunits (via domain III) on 2 adjacent RuvB subunits; this complex drives branch migration. In the full resolvosome a probable DNA-RuvA(4)-RuvB(12)-RuvC(2) complex forms which resolves the HJ.

It localises to the cytoplasm. In terms of biological role, the RuvA-RuvB-RuvC complex processes Holliday junction (HJ) DNA during genetic recombination and DNA repair, while the RuvA-RuvB complex plays an important role in the rescue of blocked DNA replication forks via replication fork reversal (RFR). RuvA specifically binds to HJ cruciform DNA, conferring on it an open structure. The RuvB hexamer acts as an ATP-dependent pump, pulling dsDNA into and through the RuvAB complex. HJ branch migration allows RuvC to scan DNA until it finds its consensus sequence, where it cleaves and resolves the cruciform DNA. The chain is Holliday junction branch migration complex subunit RuvA from Bordetella pertussis (strain Tohama I / ATCC BAA-589 / NCTC 13251).